The chain runs to 152 residues: FMN reductase (NADH) RutF (152 aa).

It belongs to the non-flavoprotein flavin reductase family. RutF subfamily.

The enzyme catalyses FMNH2 + NAD(+) = FMN + NADH + 2 H(+). Functionally, catalyzes the reduction of FMN to FMNH2 which is used to reduce pyrimidine by RutA via the Rut pathway. The sequence is that of FMN reductase (NADH) RutF from Shigella sonnei (strain Ss046).